The chain runs to 107 residues: Integration host factor subunit beta (107 aa).

The segment at 76-107 (FVPHFKPGKELRERVDGRAGEPLKADDPDDER) is disordered. Residues 82–101 (PGKELRERVDGRAGEPLKAD) are compositionally biased toward basic and acidic residues.

Belongs to the bacterial histone-like protein family. As to quaternary structure, heterodimer of an alpha and a beta chain.

In terms of biological role, this protein is one of the two subunits of integration host factor, a specific DNA-binding protein that functions in genetic recombination as well as in transcriptional and translational control. This Burkholderia cenocepacia (strain ATCC BAA-245 / DSM 16553 / LMG 16656 / NCTC 13227 / J2315 / CF5610) (Burkholderia cepacia (strain J2315)) protein is Integration host factor subunit beta.